A 908-amino-acid polypeptide reads, in one-letter code: DNA mismatch repair protein MutS (908 aa).

Residue 659–666 (GPNMAGKS) coordinates ATP.

The protein belongs to the DNA mismatch repair MutS family.

In terms of biological role, this protein is involved in the repair of mismatches in DNA. It is possible that it carries out the mismatch recognition step. This protein has a weak ATPase activity. The sequence is that of DNA mismatch repair protein MutS from Parvibaculum lavamentivorans (strain DS-1 / DSM 13023 / NCIMB 13966).